We begin with the raw amino-acid sequence, 352 residues long: tRNA pseudouridine synthase D (352 aa).

Catalysis depends on Asp-81, which acts as the Nucleophile. One can recognise a TRUD domain in the interval 157–303; sequence GVPNYFGLQR…MAHERRILRL (147 aa).

Belongs to the pseudouridine synthase TruD family.

The enzyme catalyses uridine(13) in tRNA = pseudouridine(13) in tRNA. In terms of biological role, responsible for synthesis of pseudouridine from uracil-13 in transfer RNAs. In Ectopseudomonas mendocina (strain ymp) (Pseudomonas mendocina), this protein is tRNA pseudouridine synthase D.